The chain runs to 1019 residues: MVLASFLVSGLVLGLLAQKMRPVQSKGVDLGLCDETRFECKCGDPGYVFNIPVKQCTYFYRWRPYCKPCDDLEAKDICPKYKRCQECKAGLDSCVTCPPNKYGTWCSGECQCKNGGICDQRTGACACRDRYEGVHCEILKGCPLLPSDSQVQEVRNPPDNPQTIDYSCSPGFKLKGMARISCLPNGQWSNFPPKCIRECAMVSSPEHGKVNALSGDMIEGATLRFSCDSPYYLIGQETLTCQGNGQWNGQIPQCKNLVFCPDLDPVNHAEHKVKIGVEQKYGQFPQGTEVTYTCSGNYFLMGFDTLKCNPDGSWSGSQPSCVKVADREVDCDSKAVDFLDDVGEPVRIHCPAGCSLTAGTVWGTAIYHELSSVCRAAIHAGKLPNSGGAVHVVNNGPYSDFLGSDLNGIKSEELKSLARSFRFDYVRSSTAGKSGCPDGWFEVDENCVYVTSKQRAWERAQGVCTNMAARLAVLDKDVIPNSLTETLRGKGLTTTWIGLHRLDAEKPFIWELMDRSNVVLNDNLTFWASGEPGNETNCVYMDIQDQLQSVWKTKSCFQPSSFACMMDLSDRNKAKCDDPGSLENGHATLHGQSIDGFYAGSSIRYSCEVLHYLSGTETVTCTTNGTWSAPKPRCIKVITCQNPPVPSYGSVEIKPPSRTNSISRVGSPFLRLPRLPLPLARAAKPPPKPRSSQPSTVDLASKVKLPEGHYRVGSRAIYTCESRYYELLGSQGRRCDSNGNWSGRPASCIPVCGRSDSPRSPFIWNGNSTEIGQWPWQAGISRWLADHNMWFLQCGGSLLNEKWIVTAAHCVTYSATAEIIDPNQFKMYLGKYYRDDSRDDDYVQVREALEIHVNPNYDPGNLNFDIALIQLKTPVTLTTRVQPICLPTDITTREHLKEGTLAVVTGWGLNENNTYSETIQQAVLPVVAASTCEEGYKEADLPLTVTENMFCAGYKKGRYDACSGDSGGPLVFADDSRTERRWVLEGIVSWGSPSGCGKANQYGGFTKVNVFLSWIRQFI.

The signal sequence occupies residues 1 to 25; it reads MVLASFLVSGLVLGLLAQKMRPVQS. The EGF-like domain occupies 102–137; the sequence is YGTWCSGECQCKNGGICDQRTGACACRDRYEGVHCE. 17 cysteine pairs are disulfide-bonded: Cys106/Cys118, Cys112/Cys125, Cys127/Cys136, Cys142/Cys182, Cys168/Cys195, Cys199/Cys241, Cys227/Cys254, Cys260/Cys308, Cys294/Cys321, Cys331/Cys350, Cys354/Cys374, Cys436/Cys447, Cys464/Cys564, Cys538/Cys556, Cys576/Cys621, Cys607/Cys634, and Cys720/Cys748. Sushi domains lie at 140-197, 198-256, and 258-323; these read KGCP…KCIR, ECAM…QCKN, and VFCP…SCVK. One can recognise an LCCL domain in the interval 325–421; the sequence is ADREVDCDSK…EELKSLARSF (97 aa). Positions 436–568 constitute a C-type lectin domain; sequence CPDGWFEVDE…PSSFACMMDL (133 aa). N-linked (GlcNAc...) asparagine glycans are attached at residues Asn523 and Asn534. Sushi domains follow at residues 574–636 and 689–750; these read AKCD…RCIK and PRSS…SCIP. Asn624, Asn740, and Asn767 each carry an N-linked (GlcNAc...) asparagine glycan. The 257-residue stretch at 763–1019 folds into the Peptidase S1 domain; the sequence is IWNGNSTEIG…VFLSWIRQFI (257 aa). An intrachain disulfide couples Cys794 to Cys810. Catalysis depends on charge relay system residues His809 and Asp865. An N-linked (GlcNAc...) asparagine glycan is attached at Asn912. Cys932 and Cys951 form a disulfide bridge. Residue Asp960 participates in substrate binding. Cys962 and Cys996 are joined by a disulfide. Catalysis depends on Ser966, which acts as the Charge relay system.

The protein belongs to the peptidase S1 family. As to quaternary structure, heterodimer of a light chain and a heavy chain linked by a disulfide bond.

It localises to the secreted. It carries out the reaction Selective cleavage of 103-Arg-|-Ser-104 and 124-Ile-|-Ile-125 bonds in Limulus clotting factor B to form activated factor B. Cleavage of -Pro-Arg-|-Xaa- bonds in synthetic substrates.. With respect to regulation, activated by Gram-negative bacterial lipopolysaccharides and chymotrypsin. This enzyme is closely associated with an endotoxin-sensitive hemolymph coagulation system which may play important roles in both hemostasis and host defense mechanisms. Its active form catalyzes the activation of factor B. The chain is Limulus clotting factor C from Carcinoscorpius rotundicauda (Mangrove horseshoe crab).